Consider the following 976-residue polypeptide: 5'-3' exoribonuclease 2 homolog (976 aa).

The segment at 264 to 281 (RACELCGQYGHELKECRG) adopts a CCHC-type zinc-finger fold. Over residues 411 to 420 (DEERFKENQK) the composition is skewed to basic and acidic residues. Residues 411 to 442 (DEERFKENQKNKKARMQQYGRGRGGRGRGRGQ) form a disordered region. The segment at 535–788 (DIRLYESGWK…GICVLYEDPE (254 aa)) is interaction with paxt-1. The tract at residues 815–976 (WNERRDGRFN…GGYQGNSSWR (162 aa)) is disordered. Residues 856 to 866 (DRQGGNDNYRG) are compositionally biased toward low complexity.

The protein belongs to the 5'-3' exonuclease family. XRN2/RAT1 subfamily. As to quaternary structure, interacts with paxt-1 (via N-terminus); the interaction is direct and results in stabilization of xrn-2 in the complex.

It is found in the nucleus. In terms of biological role, possesses 5'-&gt;3' exoribonuclease activity. Plays a role in maintenance of steady-state concentration and turnover of microRNAs (miRNA) by degradation of mature miRNA. Degradation role is enhanced when in complex with paxt-1. Partially redundant to xrn-1 in miRNA guide strand degradation. Implicated in differential regulation of mRNAs such as let-7 by controlling the accumulation of mature miRNA. Positively regulates molting of the pharyngeal cuticle. This is 5'-3' exoribonuclease 2 homolog from Caenorhabditis briggsae.